The following is a 375-amino-acid chain: MEVPRLDHALSSPSSPCEEIKNLSLEAIQLCDRDGNKSQDSGIAEMEELPVPHNIKINNITCDSFKISWDMDSKSKDRITHYFIDLNKKENKNSNKFKHKDVPTKLVAKAVPLPMTVRGHWFLSPRTEYTVAVQTASKQVDGDYVVSEWSEIIEFCTADYSKVHLTQLLEKADVIAGRMLKFSVFYRNQHKEYFDYVREHYGNAMQPSIKDNSGSHGSPISGKLEGIFFSCSTEFNTGKPPQDSPYGRYRFEIAAEKLFNPNTNLYFGDFYCMYTAYHYVILVIAPVGSPGDEFCKQRLPQLNSKDNNFLTCTEEDGVLVYHHAQDVILEVIYTDPVALSLGTVAEITGHQLMSLSTANAKKDPSCKTCNISVGR.

3 positions are modified to phosphoserine: Ser-11, Ser-12, and Ser-15. A glycan (N-linked (GlcNAc...) asparagine) is linked at Asn-22. A Phosphoserine modification is found at Ser-24. N-linked (GlcNAc...) asparagine glycosylation is present at Asn-36. The region spanning 51 to 160 is the Fibronectin type-III domain; that stretch reads VPHNIKINNI…EIIEFCTADY (110 aa).

This sequence belongs to the PHYHIP family.

Functionally, may play a role in the development of the central system. In Mus musculus (Mouse), this protein is Phytanoyl-CoA hydroxylase-interacting protein-like (Phyhipl).